We begin with the raw amino-acid sequence, 163 residues long: 2-C-methyl-D-erythritol 2,4-cyclodiphosphate synthase (163 aa).

Residues D11 and H13 each contribute to the a divalent metal cation site. Residues 11–13 and 37–38 each bind 4-CDP-2-C-methyl-D-erythritol 2-phosphate; these read DIH and HS. H45 provides a ligand contact to a divalent metal cation. 4-CDP-2-C-methyl-D-erythritol 2-phosphate-binding positions include 59–61, 64–68, 103–109, and R145; these read DIG, FSDTD, and AQVPKMA.

Belongs to the IspF family. Homotrimer. The cofactor is a divalent metal cation.

It catalyses the reaction 4-CDP-2-C-methyl-D-erythritol 2-phosphate = 2-C-methyl-D-erythritol 2,4-cyclic diphosphate + CMP. It functions in the pathway isoprenoid biosynthesis; isopentenyl diphosphate biosynthesis via DXP pathway; isopentenyl diphosphate from 1-deoxy-D-xylulose 5-phosphate: step 4/6. Functionally, involved in the biosynthesis of isopentenyl diphosphate (IPP) and dimethylallyl diphosphate (DMAPP), two major building blocks of isoprenoid compounds. Catalyzes the conversion of 4-diphosphocytidyl-2-C-methyl-D-erythritol 2-phosphate (CDP-ME2P) to 2-C-methyl-D-erythritol 2,4-cyclodiphosphate (ME-CPP) with a corresponding release of cytidine 5-monophosphate (CMP). This is 2-C-methyl-D-erythritol 2,4-cyclodiphosphate synthase from Nitrosomonas europaea (strain ATCC 19718 / CIP 103999 / KCTC 2705 / NBRC 14298).